The primary structure comprises 218 residues: PKHD-type hydroxylase Sala_1910 (218 aa).

Positions 74–172 constitute a Fe2OG dioxygenase domain; it reads RIAPPLLTRY…RLVAITFIQS (99 aa). Residues histidine 92, aspartate 94, and histidine 153 each contribute to the Fe cation site. Residue arginine 163 participates in 2-oxoglutarate binding.

The cofactor is Fe(2+). L-ascorbate is required as a cofactor.

This chain is PKHD-type hydroxylase Sala_1910, found in Sphingopyxis alaskensis (strain DSM 13593 / LMG 18877 / RB2256) (Sphingomonas alaskensis).